Here is a 198-residue protein sequence, read N- to C-terminus: Probable GTP-binding protein EngB (198 aa).

Residues 36-198 (SDPQFAFIGR…NLSKLQELLE (163 aa)) form the EngB-type G domain. GTP is bound by residues 44–51 (GRSNVGKS), 70–74 (GRTQL), 88–91 (DLPG), 155–158 (NKID), and 182–184 (ISA). Positions 51 and 72 each coordinate Mg(2+).

Belongs to the TRAFAC class TrmE-Era-EngA-EngB-Septin-like GTPase superfamily. EngB GTPase family. Mg(2+) is required as a cofactor.

Necessary for normal cell division and for the maintenance of normal septation. The sequence is that of Probable GTP-binding protein EngB from Mesomycoplasma hyopneumoniae (strain 7448) (Mycoplasma hyopneumoniae).